The primary structure comprises 217 residues: Lipid A acyltransferase PagP (217 aa).

The signal sequence occupies residues 1–24 (MYLKRILITLSLITLPIVPCLSYA). Catalysis depends on residues histidine 89, aspartate 132, and serine 133.

The protein belongs to the lipid A palmitoyltransferase family. As to quaternary structure, homodimer.

It localises to the cell outer membrane. The catalysed reaction is a lipid A + a 1,2-diacyl-sn-glycero-3-phosphocholine = a hepta-acyl lipid A + a 2-acyl-sn-glycero-3-phosphocholine. It catalyses the reaction a lipid IVA + a 1,2-diacyl-sn-glycero-3-phosphocholine = a lipid IVB + a 2-acyl-sn-glycero-3-phosphocholine. It carries out the reaction a lipid IIA + a 1,2-diacyl-sn-glycero-3-phosphocholine = a lipid IIB + a 2-acyl-sn-glycero-3-phosphocholine. Transfers a fatty acid residue from the sn-1 position of a phospholipid to the N-linked hydroxyfatty acid chain on the proximal unit of lipid A or its precursors. The polypeptide is Lipid A acyltransferase PagP (Pectobacterium atrosepticum (strain SCRI 1043 / ATCC BAA-672) (Erwinia carotovora subsp. atroseptica)).